We begin with the raw amino-acid sequence, 152 residues long: Regulatory protein RecX (152 aa).

It belongs to the RecX family.

It is found in the cytoplasm. Functionally, modulates RecA activity. The protein is Regulatory protein RecX of Haemophilus influenzae (strain 86-028NP).